Reading from the N-terminus, the 485-residue chain is Apolipoprotein N-acyltransferase (485 aa).

The next 6 membrane-spanning stretches (helical) occupy residues 8 to 28, 49 to 69, 76 to 96, 121 to 141, 157 to 177, and 186 to 206; these read IAGA…IAFV, GWLF…VSIH, VPLA…FIAF, WWVV…WLFL, FGIY…YLLV, and IMCL…TFIP. In terms of domain architecture, CN hydrolase spans 220–457; the sequence is VQGNIGQRLK…RLLLTGQIKP (238 aa). Residue glutamate 259 is the Proton acceptor of the active site. Lysine 317 is an active-site residue. Residue cysteine 369 is the Nucleophile of the active site. Residues 464–484 form a helical membrane-spanning segment; it reads LMRWNYYPVVGIIIIFLLLTF.

This sequence belongs to the CN hydrolase family. Apolipoprotein N-acyltransferase subfamily.

It localises to the cell inner membrane. The enzyme catalyses N-terminal S-1,2-diacyl-sn-glyceryl-L-cysteinyl-[lipoprotein] + a glycerophospholipid = N-acyl-S-1,2-diacyl-sn-glyceryl-L-cysteinyl-[lipoprotein] + a 2-acyl-sn-glycero-3-phospholipid + H(+). It functions in the pathway protein modification; lipoprotein biosynthesis (N-acyl transfer). Its function is as follows. Catalyzes the phospholipid dependent N-acylation of the N-terminal cysteine of apolipoprotein, the last step in lipoprotein maturation. In Coxiella burnetii (strain RSA 493 / Nine Mile phase I), this protein is Apolipoprotein N-acyltransferase.